Consider the following 323-residue polypeptide: Beta-ketoacyl-[acyl-carrier-protein] synthase III (323 aa).

Active-site residues include Cys-113 and His-250. The ACP-binding stretch occupies residues 251–255; the sequence is QANRR. Asn-280 is a catalytic residue.

This sequence belongs to the thiolase-like superfamily. FabH family. As to quaternary structure, homodimer.

Its subcellular location is the cytoplasm. The catalysed reaction is malonyl-[ACP] + acetyl-CoA + H(+) = 3-oxobutanoyl-[ACP] + CO2 + CoA. It participates in lipid metabolism; fatty acid biosynthesis. In terms of biological role, catalyzes the condensation reaction of fatty acid synthesis by the addition to an acyl acceptor of two carbons from malonyl-ACP. Catalyzes the first condensation reaction which initiates fatty acid synthesis and may therefore play a role in governing the total rate of fatty acid production. Possesses both acetoacetyl-ACP synthase and acetyl transacylase activities. Its substrate specificity determines the biosynthesis of branched-chain and/or straight-chain of fatty acids. The sequence is that of Beta-ketoacyl-[acyl-carrier-protein] synthase III from Allorhizobium ampelinum (strain ATCC BAA-846 / DSM 112012 / S4) (Agrobacterium vitis (strain S4)).